Reading from the N-terminus, the 89-residue chain is Probable Fe(2+)-trafficking protein (89 aa).

It belongs to the Fe(2+)-trafficking protein family.

In terms of biological role, could be a mediator in iron transactions between iron acquisition and iron-requiring processes, such as synthesis and/or repair of Fe-S clusters in biosynthetic enzymes. The protein is Probable Fe(2+)-trafficking protein of Acinetobacter baumannii (strain AB0057).